A 388-amino-acid polypeptide reads, in one-letter code: Succinate--CoA ligase [ADP-forming] subunit beta (388 aa).

Residues 9–244 (KALFAEYGLP…PSQDDAREAH (236 aa)) enclose the ATP-grasp domain. Residues lysine 46, 53–55 (GRG), glutamate 99, threonine 102, and glutamate 107 each bind ATP. Mg(2+)-binding residues include asparagine 199 and aspartate 213. Residues asparagine 264 and 321–323 (GIV) contribute to the substrate site.

It belongs to the succinate/malate CoA ligase beta subunit family. Heterotetramer of two alpha and two beta subunits. It depends on Mg(2+) as a cofactor.

The catalysed reaction is succinate + ATP + CoA = succinyl-CoA + ADP + phosphate. The enzyme catalyses GTP + succinate + CoA = succinyl-CoA + GDP + phosphate. The protein operates within carbohydrate metabolism; tricarboxylic acid cycle; succinate from succinyl-CoA (ligase route): step 1/1. Functionally, succinyl-CoA synthetase functions in the citric acid cycle (TCA), coupling the hydrolysis of succinyl-CoA to the synthesis of either ATP or GTP and thus represents the only step of substrate-level phosphorylation in the TCA. The beta subunit provides nucleotide specificity of the enzyme and binds the substrate succinate, while the binding sites for coenzyme A and phosphate are found in the alpha subunit. The sequence is that of Succinate--CoA ligase [ADP-forming] subunit beta from Shewanella loihica (strain ATCC BAA-1088 / PV-4).